A 226-amino-acid polypeptide reads, in one-letter code: HTH-type transcriptional regulator TcmR (226 aa).

The span at 1 to 16 (MDSAETDTPSTRSTPN) shows a compositional bias: polar residues. A disordered region spans residues 1–25 (MDSAETDTPSTRSTPNGPGLRQRKL). The HTH tetR-type domain maps to 26 to 86 (RRTRDQLIRE…TPISAIDEAF (61 aa)). Positions 49–68 (TVEQIAEAVEVHPRTFFRHF) form a DNA-binding region, H-T-H motif.

It functions in the pathway antibiotic biosynthesis; tetracenomycin C biosynthesis. In terms of biological role, represses transcription of the divergently oriented tcmR and tcmA (tetracenomycin C resistance and export) genes by binding to an intergenic operator region. This binding is inhibited by tetracenomycin C. In Streptomyces glaucescens, this protein is HTH-type transcriptional regulator TcmR (tcmR).